Consider the following 146-residue polypeptide: Hemoglobin subunit beta (146 aa).

Val1 carries the N-acetylvaline modification. Residues 2-146 (HLTPEEKTAV…VANALAHKYH (145 aa)) enclose the Globin domain. Thr12 bears the Phosphothreonine mark. Ser44 carries the post-translational modification Phosphoserine. Lys59 carries the post-translational modification N6-acetyllysine. Heme b is bound at residue His63. Lys82 bears the N6-acetyllysine mark. Heme b is bound at residue His92. Residue Cys93 is modified to S-nitrosocysteine. Lys144 is modified (N6-acetyllysine).

This sequence belongs to the globin family. As to quaternary structure, heterotetramer of two alpha chains and two beta chains. As to expression, red blood cells.

Involved in oxygen transport from the lung to the various peripheral tissues. The chain is Hemoglobin subunit beta (HBB) from Chlorocebus aethiops (Green monkey).